A 295-amino-acid chain; its full sequence is Urease accessory protein UreD (295 aa).

The protein belongs to the UreD family. As to quaternary structure, ureD, UreF and UreG form a complex that acts as a GTP-hydrolysis-dependent molecular chaperone, activating the urease apoprotein by helping to assemble the nickel containing metallocenter of UreC. The UreE protein probably delivers the nickel.

It is found in the cytoplasm. Required for maturation of urease via the functional incorporation of the urease nickel metallocenter. The sequence is that of Urease accessory protein UreD from Ralstonia nicotianae (strain ATCC BAA-1114 / GMI1000) (Ralstonia solanacearum).